The sequence spans 182 residues: ATP-dependent protease subunit HslV (182 aa).

T10 is a catalytic residue. Residues A166, C169, and S172 each contribute to the Na(+) site.

It belongs to the peptidase T1B family. HslV subfamily. A double ring-shaped homohexamer of HslV is capped on each side by a ring-shaped HslU homohexamer. The assembly of the HslU/HslV complex is dependent on binding of ATP.

Its subcellular location is the cytoplasm. It catalyses the reaction ATP-dependent cleavage of peptide bonds with broad specificity.. Allosterically activated by HslU binding. In terms of biological role, protease subunit of a proteasome-like degradation complex believed to be a general protein degrading machinery. This is ATP-dependent protease subunit HslV from Rickettsia bellii (strain OSU 85-389).